The following is a 370-amino-acid chain: Putative F-box protein At1g47390 (370 aa).

The 47-residue stretch at 1 to 47 (MAPEEKLPCELIEEILSRVPPESLVRFRTVSKKWNALFDDKMFINNH) folds into the F-box domain.

In Arabidopsis thaliana (Mouse-ear cress), this protein is Putative F-box protein At1g47390.